The chain runs to 373 residues: MLDNIRAGAKGRGSCPAGTNNRDLSFDFAKGILITLVIIGHLLQYLIYQGTDAFWLSPYFKSIYMFHMPLFMAISGYLSSGAILRKSFTQGVGERAMQLLLPMLFWCTLIWTLKSAVIFPMKSLTDTLLDLSTEVIGTYWFIWAAFISFILIRVLTTFNRLSIWIISASAIAVAFAPITLSITPLLKYTYPFYCLGFLFAQPIGWQNGVIWRYKWIFVVLLSIAAFICFLGWGKETYAYNNLVLIHDEQSAKQVFLMFSGSLAASAVAMQSMFQCWRLVYSTRVARFVAVQLGQSTLLLYLVQGAVFRLMDLIQFGEVWNLTTRITFATVLGVAIVVIAMAIRSIARNLGYVSRIVVGAPPRPSLLKSQSVIN.

The next 9 helical transmembrane spans lie at 27 to 47, 62 to 82, 98 to 118, 140 to 160, 164 to 184, 212 to 232, 253 to 273, 286 to 306, and 324 to 344; these read DFAK…QYLI, SIYM…SSGA, QLLL…SAVI, WFIW…TFNR, WIIS…SITP, RYKW…FLGW, QVFL…QSMF, RFVA…QGAV, and RITF…AIRS.

Belongs to the acyltransferase 3 family.

It localises to the cell membrane. Its function is as follows. Thought to be an acetyltransferase that modifies the fucose of the nod factor. This chain is Nodulation protein NolL (nolL), found in Mesorhizobium japonicum (strain LMG 29417 / CECT 9101 / MAFF 303099) (Mesorhizobium loti (strain MAFF 303099)).